The following is a 359-amino-acid chain: Chorismate synthase (359 aa).

An NADP(+)-binding site is contributed by Arg-47. FMN is bound by residues 123 to 125 (RSS), Gly-283, 298 to 302 (KPTSS), and Arg-326.

This sequence belongs to the chorismate synthase family. In terms of assembly, homotetramer. Requires FMNH2 as cofactor.

The enzyme catalyses 5-O-(1-carboxyvinyl)-3-phosphoshikimate = chorismate + phosphate. It participates in metabolic intermediate biosynthesis; chorismate biosynthesis; chorismate from D-erythrose 4-phosphate and phosphoenolpyruvate: step 7/7. Functionally, catalyzes the anti-1,4-elimination of the C-3 phosphate and the C-6 proR hydrogen from 5-enolpyruvylshikimate-3-phosphate (EPSP) to yield chorismate, which is the branch point compound that serves as the starting substrate for the three terminal pathways of aromatic amino acid biosynthesis. This reaction introduces a second double bond into the aromatic ring system. The chain is Chorismate synthase from Chlamydia caviae (strain ATCC VR-813 / DSM 19441 / 03DC25 / GPIC) (Chlamydophila caviae).